A 949-amino-acid chain; its full sequence is MAM domain-containing glycosylphosphatidylinositol anchor protein 2 (949 aa).

Residues 1-25 form the signal peptide; that stretch reads MDLVYGLVWLLTVLLEGISGQGVYA. 2 consecutive Ig-like domains span residues 27–127 and 134–232; these read PTVR…IRVD and PVVT…KMVS. 2 disulfides stabilise this stretch: cysteine 62–cysteine 110 and cysteine 159–cysteine 216. Asparagine 92, asparagine 213, and asparagine 237 each carry an N-linked (GlcNAc...) asparagine glycan. 4 Ig-like domains span residues 242 to 328, 340 to 436, 442 to 533, and 540 to 627; these read PSIK…NIIV, PDPY…VNIS, PNLT…ALVQ, and PAVE…FLVT. Cystine bridges form between cysteine 264–cysteine 310 and cysteine 359–cysteine 417. Residues asparagine 434, asparagine 443, asparagine 504, asparagine 610, and asparagine 703 are each glycosylated (N-linked (GlcNAc...) asparagine). Intrachain disulfides connect cysteine 465/cysteine 515 and cysteine 561/cysteine 611. Positions 638-738 constitute a Fibronectin type-III domain; it reads DTYNPVWQNR…TIRVIKYTGE (101 aa). In terms of domain architecture, MAM spans 739 to 914; sequence FHCGFEDGNI…VSIAEGECAK (176 aa). Aspartate 924 carries the GPI-anchor amidated aspartate lipid modification. Positions 925–949 are cleaved as a propeptide — removed in mature form; sequence GAVGILVHIWLFPVIILISILSPRR.

Interacts (through the Ig-like domains) with NLGN2.

The protein resides in the cell membrane. Its function is as follows. May be involved in cell-cell interactions. The polypeptide is MAM domain-containing glycosylphosphatidylinositol anchor protein 2 (Mdga2) (Mus musculus (Mouse)).